A 373-amino-acid polypeptide reads, in one-letter code: Leucine aminopeptidase 1 (373 aa).

The signal sequence occupies residues 1–18; that stretch reads MKLLSVLALSATATSVLG. N-linked (GlcNAc...) asparagine glycosylation occurs at asparagine 136. Residues histidine 176 and aspartate 195 each contribute to the Zn(2+) site. N-linked (GlcNAc...) asparagine glycosylation occurs at asparagine 196. Positions 234 and 261 each coordinate Zn(2+). An N-linked (GlcNAc...) asparagine glycan is attached at asparagine 284. A disulfide bond links cysteine 310 and cysteine 314. Histidine 343 provides a ligand contact to Zn(2+).

This sequence belongs to the peptidase M28 family. M28E subfamily. Monomer. The cofactor is Zn(2+).

It is found in the secreted. Functionally, extracellular aminopeptidase which contributes to pathogenicity. This Trichophyton equinum (Horse ringworm fungus) protein is Leucine aminopeptidase 1 (LAP1).